The primary structure comprises 743 residues: Threonine synthase-like 1 (743 aa).

Residue Lys281 is modified to N6-acetyllysine. N6-(pyridoxal phosphate)lysine is present on Lys351.

It belongs to the threonine synthase family. Requires pyridoxal 5'-phosphate as cofactor.

The protein is Threonine synthase-like 1 (THNSL1) of Macaca fascicularis (Crab-eating macaque).